Reading from the N-terminus, the 638-residue chain is Poly(A)-specific ribonuclease PARN (638 aa).

The a divalent metal cation site is built by D28 and E30. The segment at R143–N165 is disordered. Residues Q152–N165 show a composition bias toward polar residues. Phosphoserine is present on residues S163 and S167. An R3H domain is found at K178–D245. K220 is subject to N6-acetyllysine. The a divalent metal cation site is built by D292 and D382. K499 is modified (N6-acetyllysine). S530 is subject to Phosphoserine. Phosphoserine; by MAPKAPK2 is present on S557. Residues R573 to W638 form a disordered region. Residues S583 and S587 each carry the phosphoserine modification. Residues K606 to K615 show a composition bias toward basic residues. A phosphoserine mark is found at S619, S623, and S627.

This sequence belongs to the CAF1 family. As to quaternary structure, homodimer. Found in a mRNA decay complex with RENT1, RENT2 and RENT3B. Interacts with KHSRP. Interacts with CELF1/CUGBP1. Interacts with ZC3HAV1 in an RNA-independent manner. Interacts with DHX36. The cofactor is Mg(2+). Phosphorylation by MAPKAPK2, preventing GADD45A mRNA degradation after genotoxic stress.

It localises to the nucleus. The protein resides in the cytoplasm. It is found in the nucleolus. The enzyme catalyses Exonucleolytic cleavage of poly(A) to 5'-AMP.. In terms of biological role, 3'-exoribonuclease that has a preference for poly(A) tails of mRNAs, thereby efficiently degrading poly(A) tails. Exonucleolytic degradation of the poly(A) tail is often the first step in the decay of eukaryotic mRNAs and is also used to silence certain maternal mRNAs translationally during oocyte maturation and early embryonic development. Involved in nonsense-mediated mRNA decay, a critical process of selective degradation of mRNAs that contain premature stop codons. Also involved in degradation of inherently unstable mRNAs that contain AU-rich elements (AREs) in their 3'-UTR, possibly via its interaction with KHSRP. Probably mediates the removal of poly(A) tails of AREs mRNAs, which constitutes the first step of destabilization. Interacts with both the 3'-end poly(A) tail and the 5'-end cap structure during degradation, the interaction with the cap structure being required for an efficient degradation of poly(A) tails. Also able to recognize poly(A) tails of microRNAs such as MIR21 and H/ACA box snoRNAs (small nucleolar RNAs) leading to microRNAs degradation or snoRNA increased stability. This is Poly(A)-specific ribonuclease PARN (PARN) from Bos taurus (Bovine).